The primary structure comprises 1156 residues: MACPWQFLFKIKSQKVDLATELDINNNVGKFYQPPSSPVTQDDPKRHSPGKHGNESPQPLTGTVKTSPESLSKLDAPPSACPRHVRIKNWGSGVTFQDTLHQKAKGDLSCKSKSCLASIMNPKSLTIGPRDKPTPPDELLPQAIEFVNQYYGSFKEAKIEEHLARVEAVTKEIETTGTYQLTGDELIFATKQAWRNAPRCIGRIQWSNLQVFDARSCSTAQEMFEHICRHVRYATNNGNIRSAITVFPQRSDGKHDFRVWNAQLIRYAGYQMPDGSIRGDPANVEFTQLCIDLGWKPKYGRFDVLPLVLQADGRDPELFEIPPDLVLEVPMEHPRYEWFRELELKWYALPAVANMLLEVGGLEFPGCPFNGWYMGTEVGVRDFCDAQRYNILEEVGRRMGLETHKVASLWKDRAVVEINVAVLHSFQKQNVTIMDHHSAAESFMKYMQNEYRSRGGCPADWIWLVPPISGSITPVFHQEMLNYVLSPFYYYQVEPWKTHVWQDERRRPQRREIRFKVLVKAVFFASVLMHKAMASRVRATILFATETGRSETLAQDLGALFSCAFNPKVLCMDQYQLSHLEEEQLLLVVTSTFGNGDSPGNGEKLKKSLLMLKELTNTFRYAVFGLGSSMYPQFCAFAHDIDQKLSQLGASQLAPTGEGDELSGQEEAFRSWAVQTFKAACETFDVSGKHHIEIPKLYTSNVTWDPQHYRLVQDSEPLDLNKALSSMHAKHVFTMRLKSQQNLQSPKSSRTTLLVELSCEGSQAPSYLPGEHLGVFPCNQPALVQGILERVVDGPAPHQPVRLETLCENGSYWVKDKRLPPCSLSQALTYFLDITTPPTQLLLRKLAQLATEEAEKQRLETLCQPSDYNKWKFTNSPTFLEVLEEFPSLRVSASFLLSQLPILKPRYYSISSSRDLTPTEIHLTVAVLTYRTRDGQGPLHHGVCSTWLSSLKPQDPVPCFVRSASGFQLPEDRSRPCILIGPGTGIAPFRSFWQQRLHEAEHKGLQGGRMTLVFGCRRPEEDHLYWEEMLEMARKGVLHEVHTAYSRLPDQPKVYVQDILRQRLAGEVLRVLHEEQGHLYVCGDVRMARDVARTLKQLMATALSLNEEQVEDYFFQLKNQKRYHEDIFGAVFPYEVKKDGAAGLPSNPRAPGAHRS.

The DINNN-motif; mediates interaction with SPSB1, SPSB2 and SPSB4 signature appears at 23-27 (DINNN). Residues 27–84 (NVGKFYQPPSSPVTQDDPKRHSPGKHGNESPQPLTGTVKTSPESLSKLDAPPSACPRH) are disordered. Polar residues predominate over residues 55–70 (ESPQPLTGTVKTSPES). The Zn(2+) site is built by Cys110 and Cys115. Residue Ser118 participates in (6R)-L-erythro-5,6,7,8-tetrahydrobiopterin binding. Position 200 (Cys200) interacts with heme b. Gln263, Trp372, Tyr373, and Glu377 together coordinate L-arginine. Residues Arg381, Ile462, Trp463, and Phe476 each coordinate (6R)-L-erythro-5,6,7,8-tetrahydrobiopterin. Tyr491 lines the heme b pocket. The calmodulin-binding stretch occupies residues 515–535 (FKVLVKAVFFASVLMHKAMAS). The 139-residue stretch at 539–677 (ATILFATETG…AFRSWAVQTF (139 aa)) folds into the Flavodoxin-like domain. 5 residues coordinate FMN: Thr545, Glu546, Thr547, Arg549, and Ser550. A Phosphotyrosine modification is found at Tyr575. Positions 591, 592, 628, 635, 661, and 665 each coordinate FMN. One can recognise an FAD-binding FR-type domain in the interval 730 to 970 (KHVFTMRLKS…VRSASGFQLP (241 aa)). NADP(+) is bound at residue Arg750. 6 residues coordinate FAD: His772, Arg906, Tyr908, Ser909, Thr924, and Ala926. Residue Thr929 coordinates NADP(+). Residues Tyr930, Val943, Cys944, and Ser945 each coordinate FAD. Residues Thr984, Arg1017, Ser1046, Arg1047, Lys1053, Tyr1055, Gln1057, and Asp1090 each coordinate NADP(+).

Belongs to the NOS family. Homodimer. Interacts with NHERF1. Interacts with GAPDH; induced by oxidatively-modified low-densitity lipoprotein (LDL(ox)). Interacts with S100A8 and S100A9 to form the iNOS-S100A8/9 transnitrosylase complex. Interacts with SPSB1, SPSB2 and SPSB4. Interacts with ELOC and CUL5 in the presence of SPSB1 or SPSB2 or SPSB4. Forms a complex with ASL, ASS1 and HSP90AA1; the complex regulates cell-autonomous L-arginine synthesis and citrulline recycling while channeling extracellular L-arginine to nitric oxide synthesis pathway. Heme b is required as a cofactor. It depends on FAD as a cofactor. Requires FMN as cofactor. (6R)-L-erythro-5,6,7,8-tetrahydrobiopterin serves as cofactor. In terms of processing, polyubiquitinated; mediated by SPSB1, SPSB2 and SPSB4, leading to proteasomal degradation.

The protein localises to the cytoplasm. The protein resides in the cytosol. It carries out the reaction 2 L-arginine + 3 NADPH + 4 O2 + H(+) = 2 L-citrulline + 2 nitric oxide + 3 NADP(+) + 4 H2O. With respect to regulation, regulated by calcium/calmodulin. Produces nitric oxide (NO) which is a messenger molecule with diverse functions throughout the body. In macrophages, NO mediates tumoricidal and bactericidal actions. Also has nitrosylase activity and mediates cysteine S-nitrosylation of cytoplasmic target proteins such PTGS2/COX2. As component of the iNOS-S100A8/9 transnitrosylase complex involved in the selective inflammatory stimulus-dependent S-nitrosylation of GAPDH implicated in regulation of the GAIT complex activity and probably multiple targets including ANXA5, EZR, MSN and VIM. Involved in inflammation, enhances the synthesis of pro-inflammatory mediators such as IL6 and IL8. This is Nitric oxide synthase, inducible (NOS2) from Bos taurus (Bovine).